A 211-amino-acid polypeptide reads, in one-letter code: CASP-like protein 3A1 (211 aa).

The Cytoplasmic portion of the chain corresponds to 1 to 45; it reads MGSIGNGRSDSVVGIQMPPAGSKMVLEPEALQVTTSPVPRWPRLG. A helical transmembrane segment spans residues 46-66; it reads VVMVATRAVAMVMALLSMSLM. Residues 67–95 lie on the Extracellular side of the membrane; that stretch reads VSSKQRGILTIFGIEIPLDANWSFSYSLQ. A glycan (N-linked (GlcNAc...) asparagine) is linked at Asn87. The helical transmembrane segment at 96 to 116 threads the bilayer; the sequence is FLVAMSTASAAYSLAQLLLIA. The Cytoplasmic segment spans residues 117–131; sequence HKAVKKSPIVPSRRH. The helical transmembrane segment at 132–152 threads the bilayer; that stretch reads AWLLFAGDQVFSLAMMSAGSA. Topologically, residues 153–186 are extracellular; that stretch reads AAAVANLNRTGIRHTALPNFCKPLPRFCDLSAVS. Asn160 carries an N-linked (GlcNAc...) asparagine glycan. A helical membrane pass occupies residues 187–207; the sequence is IACAFLSCVFLAASAVIDVIW. The Cytoplasmic segment spans residues 208–211; it reads LSSP.

This sequence belongs to the Casparian strip membrane proteins (CASP) family. In terms of assembly, homodimer and heterodimers.

The protein resides in the cell membrane. This is CASP-like protein 3A1 from Sorghum bicolor (Sorghum).